A 393-amino-acid polypeptide reads, in one-letter code: NAD(P)H-quinone oxidoreductase subunit H, chloroplastic (393 aa).

Belongs to the complex I 49 kDa subunit family. As to quaternary structure, NDH is composed of at least 16 different subunits, 5 of which are encoded in the nucleus.

Its subcellular location is the plastid. The protein resides in the chloroplast thylakoid membrane. It catalyses the reaction a plastoquinone + NADH + (n+1) H(+)(in) = a plastoquinol + NAD(+) + n H(+)(out). The enzyme catalyses a plastoquinone + NADPH + (n+1) H(+)(in) = a plastoquinol + NADP(+) + n H(+)(out). NDH shuttles electrons from NAD(P)H:plastoquinone, via FMN and iron-sulfur (Fe-S) centers, to quinones in the photosynthetic chain and possibly in a chloroplast respiratory chain. The immediate electron acceptor for the enzyme in this species is believed to be plastoquinone. Couples the redox reaction to proton translocation, and thus conserves the redox energy in a proton gradient. The sequence is that of NAD(P)H-quinone oxidoreductase subunit H, chloroplastic from Helianthus annuus (Common sunflower).